The following is a 126-amino-acid chain: Holo-[acyl-carrier-protein] synthase (126 aa).

The Mg(2+) site is built by D9 and E58.

This sequence belongs to the P-Pant transferase superfamily. AcpS family. It depends on Mg(2+) as a cofactor.

Its subcellular location is the cytoplasm. The catalysed reaction is apo-[ACP] + CoA = holo-[ACP] + adenosine 3',5'-bisphosphate + H(+). Transfers the 4'-phosphopantetheine moiety from coenzyme A to a Ser of acyl-carrier-protein. The sequence is that of Holo-[acyl-carrier-protein] synthase from Vibrio campbellii (strain ATCC BAA-1116).